The chain runs to 1227 residues: DNA-directed RNA polymerase subunit beta' (1227 aa).

Zn(2+)-binding residues include Cys-60, Cys-62, Cys-75, and Cys-78. 3 residues coordinate Mg(2+): Asp-449, Asp-451, and Asp-453. Zn(2+)-binding residues include Cys-847, Cys-921, Cys-928, and Cys-931.

Belongs to the RNA polymerase beta' chain family. The RNAP catalytic core consists of 2 alpha, 1 beta, 1 beta' and 1 omega subunit. When a sigma factor is associated with the core the holoenzyme is formed, which can initiate transcription. Requires Mg(2+) as cofactor. Zn(2+) is required as a cofactor.

The catalysed reaction is RNA(n) + a ribonucleoside 5'-triphosphate = RNA(n+1) + diphosphate. In terms of biological role, DNA-dependent RNA polymerase catalyzes the transcription of DNA into RNA using the four ribonucleoside triphosphates as substrates. The polypeptide is DNA-directed RNA polymerase subunit beta' (Lysinibacillus sphaericus (strain C3-41)).